The chain runs to 173 residues: Transcription factor E (173 aa).

The HTH TFE/IIEalpha-type domain occupies 9 to 92; it reads NNPATRAYIH…LWQLRIDLLY (84 aa).

This sequence belongs to the TFE family. Monomer. Interaction with RNA polymerase subunits RpoF and RpoE is necessary for Tfe stimulatory transcription activity. Able to interact with Tbp and RNA polymerase in the absence of DNA promoter. Interacts both with the preinitiation and elongation complexes.

Functionally, transcription factor that plays a role in the activation of archaeal genes transcribed by RNA polymerase. Facilitates transcription initiation by enhancing TATA-box recognition by TATA-box-binding protein (Tbp), and transcription factor B (Tfb) and RNA polymerase recruitment. Not absolutely required for transcription in vitro, but particularly important in cases where Tbp or Tfb function is not optimal. It dynamically alters the nucleic acid-binding properties of RNA polymerases by stabilizing the initiation complex and destabilizing elongation complexes. Seems to translocate with the RNA polymerase following initiation and acts by binding to the non template strand of the transcription bubble in elongation complexes. In Methanoregula boonei (strain DSM 21154 / JCM 14090 / 6A8), this protein is Transcription factor E.